We begin with the raw amino-acid sequence, 369 residues long: MSLPIEQYPELLAQKVDNLTALLAPFNPPPFDIFASETSHFRMRAEFRVWHQKNEQGENDLYHIMFDPTTKQRYRVDQLPIANQLINTMMQKLLTQIQGIPVLTHKLFQVDYLTTLSGEIAISLLYHKKLTDEWLAQAKLLKQRLSEPGLTVHIIGRASKQKIAIDCDYVKEKLNVAGKTLIYRQVENSFTQPNAKMNINMLEWAQKCTANSQDSDLLELYCGNGNFSIALAGNFRKVLATEICKSSVHSAQYNIAQNGIDNLQIIRMSAEEFTQAINGVRQFNRLQGIDLSAYQCNTIFVDPPRAGLDQATLNMVQNYPRILYISCNPATLADNLRQLTTTHRIERVALFDQFPYTHHIESGVWLIRK.

S-adenosyl-L-methionine-binding residues include Q192, Y221, N226, E242, and D302. C327 serves as the catalytic Nucleophile. E361 functions as the Proton acceptor in the catalytic mechanism.

The protein belongs to the class I-like SAM-binding methyltransferase superfamily. RNA M5U methyltransferase family. TrmA subfamily.

The catalysed reaction is uridine(54) in tRNA + S-adenosyl-L-methionine = 5-methyluridine(54) in tRNA + S-adenosyl-L-homocysteine + H(+). The enzyme catalyses uridine(341) in tmRNA + S-adenosyl-L-methionine = 5-methyluridine(341) in tmRNA + S-adenosyl-L-homocysteine + H(+). Functionally, dual-specificity methyltransferase that catalyzes the formation of 5-methyluridine at position 54 (m5U54) in all tRNAs, and that of position 341 (m5U341) in tmRNA (transfer-mRNA). The sequence is that of tRNA/tmRNA (uracil-C(5))-methyltransferase from Haemophilus ducreyi (strain 35000HP / ATCC 700724).